We begin with the raw amino-acid sequence, 373 residues long: Probable tRNA sulfurtransferase (373 aa).

The 105-residue stretch at 54–158 folds into the THUMP domain; sequence NKNIEELSKV…NDVAYFYHKI (105 aa). ATP contacts are provided by residues 176-177, 201-202, Lys256, Gly278, and Gln287; these read LF and NF.

This sequence belongs to the ThiI family.

The protein resides in the cytoplasm. It carries out the reaction [ThiI sulfur-carrier protein]-S-sulfanyl-L-cysteine + a uridine in tRNA + 2 reduced [2Fe-2S]-[ferredoxin] + ATP + H(+) = [ThiI sulfur-carrier protein]-L-cysteine + a 4-thiouridine in tRNA + 2 oxidized [2Fe-2S]-[ferredoxin] + AMP + diphosphate. The enzyme catalyses [ThiS sulfur-carrier protein]-C-terminal Gly-Gly-AMP + S-sulfanyl-L-cysteinyl-[cysteine desulfurase] + AH2 = [ThiS sulfur-carrier protein]-C-terminal-Gly-aminoethanethioate + L-cysteinyl-[cysteine desulfurase] + A + AMP + 2 H(+). It functions in the pathway cofactor biosynthesis; thiamine diphosphate biosynthesis. Catalyzes the ATP-dependent transfer of a sulfur to tRNA to produce 4-thiouridine in position 8 of tRNAs, which functions as a near-UV photosensor. Also catalyzes the transfer of sulfur to the sulfur carrier protein ThiS, forming ThiS-thiocarboxylate. This is a step in the synthesis of thiazole, in the thiamine biosynthesis pathway. The sulfur is donated as persulfide by IscS. The polypeptide is Probable tRNA sulfurtransferase (Saccharolobus islandicus (strain M.16.4 / Kamchatka #3) (Sulfolobus islandicus)).